The chain runs to 191 residues: GTP-binding protein CIN4 (191 aa).

GTP contacts are provided by residues glycine 23–serine 30, aspartate 69–glutamine 73, and asparagine 131–aspartate 134.

Functionally, implicated in yeast microtubule function. This chain is GTP-binding protein CIN4 (CIN4), found in Saccharomyces cerevisiae (strain ATCC 204508 / S288c) (Baker's yeast).